The primary structure comprises 474 residues: MSEELWQRCLTRLEDELPSQQFNMWIRPLQVAASADGAELTLFAPNRFVVDWVRDKYLDRISEVLGEMQSGPLPQLRLEVGSTRASTPAASYFNGSSSSSSNGPITTPAAAPAPRQPESDSRPQPTSLGGARKHRSNLNTGFTFSTFVEGKSNRMAAAAAQQVAENPASHGYNPLLLYGGVGLGKTHLMHAVGNELLRRNPNAKVVYLHSERFVADMISALRNKTINEFKRFYRSVDALLIDDIQFFAGKEQSQEEFFHTFNALLENGQQIILTCDKFPKEVDGLEERLKSRFGWGLSQPMEPPELETRVAILKKKAEEAKVDLPNDAAFFIAQRIRSNVRELEGALRRVIAHVRFTGAQIDIGLIKEALKDLIALQARQISIDNIQRIVAEYYKIKINDLLSPRRTRSVARPRQVAMALSKELTSHSLPEIGENFGGRDHTTVLHACRKVLELRESNPEIEEDYLNLLRTLTS.

Residues 1-91 are domain I, interacts with DnaA modulators; sequence MSEELWQRCL…STRASTPAAS (91 aa). The disordered stretch occupies residues 89–138; sequence AASYFNGSSSSSSNGPITTPAAAPAPRQPESDSRPQPTSLGGARKHRSNL. The domain II stretch occupies residues 91 to 136; it reads SYFNGSSSSSSNGPITTPAAAPAPRQPESDSRPQPTSLGGARKHRS. Over residues 96-113 the composition is skewed to low complexity; that stretch reads SSSSSSNGPITTPAAAPA. The tract at residues 137–354 is domain III, AAA+ region; sequence NLNTGFTFST…GALRRVIAHV (218 aa). The ATP site is built by glycine 182, glycine 184, lysine 185, and threonine 186. The segment at 355–474 is domain IV, binds dsDNA; sequence RFTGAQIDIG…YLNLLRTLTS (120 aa).

The protein belongs to the DnaA family. Oligomerizes as a right-handed, spiral filament on DNA at oriC.

The protein localises to the cytoplasm. Functionally, plays an essential role in the initiation and regulation of chromosomal replication. ATP-DnaA binds to the origin of replication (oriC) to initiate formation of the DNA replication initiation complex once per cell cycle. Binds the DnaA box (a 9 base pair repeat at the origin) and separates the double-stranded (ds)DNA. Forms a right-handed helical filament on oriC DNA; dsDNA binds to the exterior of the filament while single-stranded (ss)DNA is stabiized in the filament's interior. The ATP-DnaA-oriC complex binds and stabilizes one strand of the AT-rich DNA unwinding element (DUE), permitting loading of DNA polymerase. After initiation quickly degrades to an ADP-DnaA complex that is not apt for DNA replication. Binds acidic phospholipids. The protein is Chromosomal replication initiator protein DnaA of Alcanivorax borkumensis (strain ATCC 700651 / DSM 11573 / NCIMB 13689 / SK2).